The primary structure comprises 116 residues: Large ribosomal subunit protein bL19 (116 aa).

The protein belongs to the bacterial ribosomal protein bL19 family.

Its function is as follows. This protein is located at the 30S-50S ribosomal subunit interface and may play a role in the structure and function of the aminoacyl-tRNA binding site. The sequence is that of Large ribosomal subunit protein bL19 from Pseudomonas fluorescens (strain Pf0-1).